Reading from the N-terminus, the 444-residue chain is uncharacterized protein (444 aa).

14 helical membrane-spanning segments follow: residues 9–29, 42–62, 82–102, 104–126, 136–156, 164–184, 193–213, 217–237, 263–283, 295–315, 324–344, 347–367, 387–407, and 411–431; these read LIVS…MIAV, IASI…TQPI, LFLI…LIVF, ALQA…HVVS, FFGL…SILI, IFWV…TMFP, APLD…IILL, EAPW…PLFF, LSVL…PLFM, GMAL…GAQL, IIFL…LLSS, SVLF…VGLT, GIFS…IGLI, and HTLF…SLGI.

This sequence belongs to the major facilitator superfamily. TCR/Tet family.

It is found in the cell membrane. This is an uncharacterized protein from Bacillus subtilis (strain 168).